The sequence spans 135 residues: Large ribosomal subunit protein uL16c (135 aa).

Residues 1-17 are compositionally biased toward basic residues; that stretch reads MLSPKRTRFRKQHRGRM. Residues 1–21 are disordered; it reads MLSPKRTRFRKQHRGRMKGVS.

This sequence belongs to the universal ribosomal protein uL16 family. As to quaternary structure, part of the 50S ribosomal subunit.

The protein resides in the plastid. It is found in the chloroplast. The chain is Large ribosomal subunit protein uL16c from Amborella trichopoda.